The sequence spans 240 residues: Small ribosomal subunit protein uS3 (240 aa).

Positions 39–107 (IRDFIKKEAK…ELHLNIVEVR (69 aa)) constitute a KH type-2 domain. 2 stretches are compositionally biased toward basic and acidic residues: residues 212–221 (PQARDRRATE) and 231–240 (PRRDRDRDAR). The disordered stretch occupies residues 212-240 (PQARDRRATEAQDGPSPRGPRRDRDRDAR).

It belongs to the universal ribosomal protein uS3 family. Part of the 30S ribosomal subunit. Forms a tight complex with proteins S10 and S14.

Its function is as follows. Binds the lower part of the 30S subunit head. Binds mRNA in the 70S ribosome, positioning it for translation. This Paracoccus denitrificans (strain Pd 1222) protein is Small ribosomal subunit protein uS3.